A 1527-amino-acid polypeptide reads, in one-letter code: Lysophospholipase nte1 (1527 aa).

Topologically, residues 1-73 (MADSGASVPS…SPPTPTTMVG (73 aa)) are cytoplasmic. The helical transmembrane segment at 74 to 94 (WIGWVFSLVFQTIPSVLYWVI) threads the bilayer. At 95–116 (TFSTITLPTWLFTLFSMSLTFT) the chain is on the lumenal side. Residues 117–137 (MNFTTLLLIVLGLVSTVSWFI) traverse the membrane as a helical segment. Residues 138–1527 (RYRFLNMYSR…RTLAPRRASI (1390 aa)) are Cytoplasmic-facing. The span at 299–310 (GSSSSMSSVQPS) shows a compositional bias: low complexity. 3 disordered regions span residues 299-387 (GSSS…RRKS), 567-596 (DQFA…QRKD), and 765-785 (ATSR…KKPS). A compositionally biased stretch (polar residues) spans 364–377 (RASSYHPNGQSTAS). A nucleoside 3',5'-cyclic phosphate is bound by residues 682 to 809 (GGTS…SYRS) and 846 to 966 (RLTG…IAQR). Positions 1224–1388 (LVLGGGGARG…IDNLTVAHMK (165 aa)) constitute a PNPLA domain. Positions 1228-1233 (GGGARG) match the GXGXXG motif. A GXSXG motif is present at residues 1255–1259 (GTSIG). The Nucleophile role is filled by Ser1257. Asp1375 functions as the Proton acceptor in the catalytic mechanism. A DGA/G motif is present at residues 1375–1377 (DGG). The disordered stretch occupies residues 1504–1527 (LPLPEENEEKKKLQRTLAPRRASI).

The protein belongs to the NTE family.

The protein resides in the endoplasmic reticulum membrane. The enzyme catalyses a 1-acyl-sn-glycero-3-phosphocholine + H2O = sn-glycerol 3-phosphocholine + a fatty acid + H(+). With respect to regulation, inhibited by organophosphorus esters. In terms of biological role, intracellular phospholipase B that catalyzes the double deacylation of phosphatidylcholine (PC) to glycerophosphocholine (GroPCho). Plays an important role in membrane lipid homeostasis. Responsible for the rapid PC turnover in response to inositol, elevated temperatures, or when choline is present in the growth medium. This is Lysophospholipase nte1 (nte1) from Emericella nidulans (strain FGSC A4 / ATCC 38163 / CBS 112.46 / NRRL 194 / M139) (Aspergillus nidulans).